Here is a 138-residue protein sequence, read N- to C-terminus: Proofreading thioesterase EntH (138 aa).

Glutamate 64 functions as the Nucleophile or proton acceptor in the catalytic mechanism.

The protein belongs to the thioesterase PaaI family. As to quaternary structure, homotetramer. Dimer of dimers. Interacts specifically with the aryl carrier protein (ArCP) domain of EntB.

It localises to the cytoplasm. It functions in the pathway siderophore biosynthesis; enterobactin biosynthesis. Required for optimal enterobactin synthesis. Acts as a proofreading enzyme that prevents EntB misacylation by hydrolyzing the thioester bound existing between EntB and wrongly charged molecules. The polypeptide is Proofreading thioesterase EntH (Citrobacter rodentium (strain ICC168) (Citrobacter freundii biotype 4280)).